We begin with the raw amino-acid sequence, 805 residues long: Transcription factor SFL1 (805 aa).

Over residues 1-24 (MSHLVSSSLGTTTTATPTSRSPHT) the composition is skewed to low complexity. Residues 1–110 (MSHLVSSSLG…NNNVSNNNST (110 aa)) form a disordered region. The span at 25–69 (NHSTPYNQNSITSNRSSPVPKNSVNSRIIPQTMNPPIDMKSNNIL) shows a compositional bias: polar residues. A compositionally biased stretch (basic and acidic residues) spans 71–85 (PEKDTDTSRGDHSES). Residues 86–110 (KASSISSASGTTTTNNNNVSNNNST) show a composition bias toward low complexity. Residues 117–226 (FIHKLYDMLH…LKNIKRRSSK (110 aa)) mediate DNA binding. Disordered stretches follow at residues 273–336 (MQSP…NQSP), 438–483 (QSNF…VAPQ), 513–675 (REDS…PAPQ), 691–746 (HQKS…SENH), and 759–805 (VSEL…RKLE). The span at 295–310 (QQQQQQQQQQQQQQQQ) shows a compositional bias: low complexity. 2 stretches are compositionally biased toward polar residues: residues 454 to 480 (HGNS…NLNV) and 533 to 556 (PSRN…NFNP). The segment covering 557–566 (QQSQSQSQVQ) has biased composition (low complexity). 3 stretches are compositionally biased toward polar residues: residues 581-597 (ESTY…SQIL), 604-614 (VNHSPLVQQQQ), and 622-635 (NDSS…SSLP). Residues 637–659 (TRPLSRQQQQQQQTLHHPSTTSS) show a composition bias toward low complexity. The segment covering 716–738 (PISSTAPTTMITSTSKPTSTSGA) has biased composition (polar residues).

Belongs to the HSF family.

It localises to the nucleus. Functionally, transcription factor that plays a role of repressor of filamentous growth and flocculation. Antagonizes functions of SFL2 and FLO8. Plays a role in the hyphal repression induced by secreted factors like dodecanol by competitors such as Pseudomonas aeruginosa and Burkholderia cenocepacia. This is Transcription factor SFL1 (SFL1) from Candida albicans (strain SC5314 / ATCC MYA-2876) (Yeast).